We begin with the raw amino-acid sequence, 273 residues long: Kit ligand (273 aa).

The signal sequence occupies residues 1 to 25 (MKKTQTWIITCIYLQLLLFNPLVKT). Q26 is modified (pyrrolidone carboxylic acid). Residues 26–214 (QEICRNPVTD…AKSPEDPGLQ (189 aa)) are Extracellular-facing. Intrachain disulfides connect C29–C114 and C68–C163. The N-linked (GlcNAc...) asparagine; partial glycan is linked to N90. Residue N145 is glycosylated (N-linked (GlcNAc...) asparagine). S167 carries O-linked (GalNAc...) serine glycosylation. Residues T168 and T180 are each glycosylated (O-linked (GalNAc...) threonine). The segment at 190–211 (ASSLRNDSSSSNRKAAKSPEDP) is disordered. Residues 191-202 (SSLRNDSSSSNR) show a composition bias toward low complexity. N-linked (GlcNAc...) asparagine glycosylation is present at N195. Residues 215-237 (WTAMALPALISLVIGFAFGALYW) form a helical membrane-spanning segment. Residues 238–273 (KKKQSSLTRAVENIQINEEDNEISMLQQKEREFQEV) lie on the Cytoplasmic side of the membrane.

This sequence belongs to the SCF family. In terms of assembly, homodimer, non-covalently linked. Heterotetramer with KIT, binding two KIT molecules; thereby mediates KIT dimerization and subsequent activation by autophosphorylation. In terms of processing, a soluble form is produced by proteolytic processing of isoform 1 in the extracellular domain. The identity of N- and O-linked saccharides is not reported in PubMed:1708771. The O-linked polysaccharides are probably the mucin type linked to GalNAc.

It localises to the cell membrane. It is found in the cytoplasm. The protein resides in the cytoskeleton. The protein localises to the cell projection. Its subcellular location is the lamellipodium. It localises to the filopodium. It is found in the secreted. Ligand for the receptor-type protein-tyrosine kinase KIT. Plays an essential role in the regulation of cell survival and proliferation, hematopoiesis, stem cell maintenance, gametogenesis, mast cell development, migration and function, and in melanogenesis. KITLG/SCF binding can activate several signaling pathways. Promotes phosphorylation of PIK3R1, the regulatory subunit of phosphatidylinositol 3-kinase, and subsequent activation of the kinase AKT1. KITLG/SCF and KIT also transmit signals via GRB2 and activation of RAS, RAF1 and the MAP kinases MAPK1/ERK2 and/or MAPK3/ERK1. KITLG/SCF and KIT promote activation of STAT family members STAT1, STAT3 and STAT5. KITLG/SCF and KIT promote activation of PLCG1, leading to the production of the cellular signaling molecules diacylglycerol and inositol 1,4,5-trisphosphate. KITLG/SCF acts synergistically with other cytokines, probably interleukins. The chain is Kit ligand (Kitlg) from Rattus norvegicus (Rat).